A 509-amino-acid polypeptide reads, in one-letter code: Kynureninase 1 (509 aa).

Pyridoxal 5'-phosphate-binding positions include Leu-154, Thr-155, 183–186 (FPSD), Asp-270, His-273, and Tyr-295. Position 296 is an N6-(pyridoxal phosphate)lysine (Lys-296). Pyridoxal 5'-phosphate contacts are provided by Trp-345 and Asn-373.

It belongs to the kynureninase family. As to quaternary structure, homodimer. The cofactor is pyridoxal 5'-phosphate.

It localises to the cytoplasm. The catalysed reaction is L-kynurenine + H2O = anthranilate + L-alanine + H(+). It carries out the reaction 3-hydroxy-L-kynurenine + H2O = 3-hydroxyanthranilate + L-alanine + H(+). The protein operates within amino-acid degradation; L-kynurenine degradation; L-alanine and anthranilate from L-kynurenine: step 1/1. Its pathway is cofactor biosynthesis; NAD(+) biosynthesis; quinolinate from L-kynurenine: step 2/3. Catalyzes the cleavage of L-kynurenine (L-Kyn) and L-3-hydroxykynurenine (L-3OHKyn) into anthranilic acid (AA) and 3-hydroxyanthranilic acid (3-OHAA), respectively. This Chaetomium globosum (strain ATCC 6205 / CBS 148.51 / DSM 1962 / NBRC 6347 / NRRL 1970) (Soil fungus) protein is Kynureninase 1.